A 197-amino-acid polypeptide reads, in one-letter code: Carbohydrate-binding domain-containing protein C2E1P3.05c (197 aa).

The signal sequence occupies residues 1-23; the sequence is MLTQSLFLTVLTLALSLVSKTSA. 2 CBM1 domains span residues 25–61 and 68–104; these read QCSP…SQCI and PCAK…SQCI. 4 disulfide bridges follow: C33/C50, C44/C60, C76/C93, and C87/C103. The interval 115–163 is disordered; the sequence is SSAASSTTSTTSSSSLVSSTTLTSSSPSAVSSTTSIPSISSTISSSVST. N-linked (GlcNAc...) asparagine glycosylation is found at N182 and N193.

The protein localises to the secreted. The sequence is that of Carbohydrate-binding domain-containing protein C2E1P3.05c from Schizosaccharomyces pombe (strain 972 / ATCC 24843) (Fission yeast).